The primary structure comprises 330 residues: Ketol-acid reductoisomerase (NADP(+)) (330 aa).

Positions Val2–Thr182 constitute a KARI N-terminal Rossmann domain. NADP(+)-binding positions include Tyr25–Gln28, Arg48, Ser53, and Asp83–Gln86. Residue His108 is part of the active site. Gly134 lines the NADP(+) pocket. The region spanning Thr183–Glu328 is the KARI C-terminal knotted domain. Mg(2+) contacts are provided by Asp191, Glu195, Glu227, and Glu231. A substrate-binding site is contributed by Ser252.

The protein belongs to the ketol-acid reductoisomerase family. The cofactor is Mg(2+).

It catalyses the reaction (2R)-2,3-dihydroxy-3-methylbutanoate + NADP(+) = (2S)-2-acetolactate + NADPH + H(+). The enzyme catalyses (2R,3R)-2,3-dihydroxy-3-methylpentanoate + NADP(+) = (S)-2-ethyl-2-hydroxy-3-oxobutanoate + NADPH + H(+). The protein operates within amino-acid biosynthesis; L-isoleucine biosynthesis; L-isoleucine from 2-oxobutanoate: step 2/4. It participates in amino-acid biosynthesis; L-valine biosynthesis; L-valine from pyruvate: step 2/4. In terms of biological role, involved in the biosynthesis of branched-chain amino acids (BCAA). Catalyzes an alkyl-migration followed by a ketol-acid reduction of (S)-2-acetolactate (S2AL) to yield (R)-2,3-dihydroxy-isovalerate. In the isomerase reaction, S2AL is rearranged via a Mg-dependent methyl migration to produce 3-hydroxy-3-methyl-2-ketobutyrate (HMKB). In the reductase reaction, this 2-ketoacid undergoes a metal-dependent reduction by NADPH to yield (R)-2,3-dihydroxy-isovalerate. This Methanocaldococcus jannaschii (strain ATCC 43067 / DSM 2661 / JAL-1 / JCM 10045 / NBRC 100440) (Methanococcus jannaschii) protein is Ketol-acid reductoisomerase (NADP(+)).